An 860-amino-acid chain; its full sequence is DNA mismatch repair protein MutS (860 aa).

607–614 (GPNMSGKS) serves as a coordination point for ATP.

This sequence belongs to the DNA mismatch repair MutS family.

Its function is as follows. This protein is involved in the repair of mismatches in DNA. It is possible that it carries out the mismatch recognition step. This protein has a weak ATPase activity. The chain is DNA mismatch repair protein MutS from Listeria welshimeri serovar 6b (strain ATCC 35897 / DSM 20650 / CCUG 15529 / CIP 8149 / NCTC 11857 / SLCC 5334 / V8).